The following is a 100-amino-acid chain: MQFSIATIALFLSSAMAAPYSGNSNSDSYDPCTGLLQKSPQCCNTDILGVANLDCHGPPSVPTSPSQFQASCVADGGRSARCCTLSLLGLALVCTDPVGI.

An N-terminal signal peptide occupies residues Met1–Asn25. 4 disulfide bridges follow: Cys32-Cys82, Cys42-Cys72, Cys43-Cys55, and Cys83-Cys94.

The protein belongs to the cerato-ulmin hydrophobin family. In terms of assembly, homotetramer. Further self-assembles to form highly ordered films at water-air interfaces through intermolecular interactions.

The protein localises to the secreted. It localises to the cell wall. Its function is as follows. Aerial growth, conidiation, and dispersal of filamentous fungi in the environment rely upon a capability of their secreting small amphipathic proteins called hydrophobins (HPBs) with low sequence identity. Class I can self-assemble into an outermost layer of rodlet bundles on aerial cell surfaces, conferring cellular hydrophobicity that supports fungal growth, development and dispersal; whereas Class II form highly ordered films at water-air interfaces through intermolecular interactions but contribute nothing to the rodlet structure. CU is a class II hydrophobin that is implicated in the pathogenicity of this fungus on elm trees. Required for hydrophobicity and adherence of the cells and acts as a parasitic fitness factor by protecting infectious propagules from desiccation. Reduces the interfacial tension of both oil-water and air-water interfaces. The polypeptide is Class II hydrophobin CU (Ophiostoma ulmi (Dutch elm disease fungus)).